We begin with the raw amino-acid sequence, 176 residues long: NAD(P)H-quinone oxidoreductase subunit J (176 aa).

Polar residues-rich tracts occupy residues 1–12 (MEKDSQATSSDT) and 20–30 (ISQSLSKDGIP). Positions 1 to 30 (MEKDSQATSSDTSIEKEGVISQSLSKDGIP) are disordered.

This sequence belongs to the complex I 30 kDa subunit family. As to quaternary structure, NDH-1 can be composed of about 15 different subunits; different subcomplexes with different compositions have been identified which probably have different functions.

The protein localises to the cellular thylakoid membrane. It catalyses the reaction a plastoquinone + NADH + (n+1) H(+)(in) = a plastoquinol + NAD(+) + n H(+)(out). The enzyme catalyses a plastoquinone + NADPH + (n+1) H(+)(in) = a plastoquinol + NADP(+) + n H(+)(out). Functionally, NDH-1 shuttles electrons from an unknown electron donor, via FMN and iron-sulfur (Fe-S) centers, to quinones in the respiratory and/or the photosynthetic chain. The immediate electron acceptor for the enzyme in this species is believed to be plastoquinone. Couples the redox reaction to proton translocation, and thus conserves the redox energy in a proton gradient. Cyanobacterial NDH-1 also plays a role in inorganic carbon-concentration. The polypeptide is NAD(P)H-quinone oxidoreductase subunit J (Prochlorococcus marinus (strain AS9601)).